We begin with the raw amino-acid sequence, 892 residues long: Alanine--tRNA ligase (892 aa).

Zn(2+)-binding residues include His577, His581, Cys680, and His684.

Belongs to the class-II aminoacyl-tRNA synthetase family. It depends on Zn(2+) as a cofactor.

Its subcellular location is the cytoplasm. It catalyses the reaction tRNA(Ala) + L-alanine + ATP = L-alanyl-tRNA(Ala) + AMP + diphosphate. Its function is as follows. Catalyzes the attachment of alanine to tRNA(Ala) in a two-step reaction: alanine is first activated by ATP to form Ala-AMP and then transferred to the acceptor end of tRNA(Ala). Also edits incorrectly charged Ser-tRNA(Ala) and Gly-tRNA(Ala) via its editing domain. This chain is Alanine--tRNA ligase, found in Paenarthrobacter aurescens (strain TC1).